The primary structure comprises 207 residues: Small ribosomal subunit protein uS4 (207 aa).

The segment at 31–51 is disordered; that stretch reads KCKLDSKPGQHGRTSGARTSD. An S4 RNA-binding domain is found at 97-160; the sequence is SRLDNVVYRM…KKQARIRESL (64 aa).

The protein belongs to the universal ribosomal protein uS4 family. In terms of assembly, part of the 30S ribosomal subunit. Contacts protein S5. The interaction surface between S4 and S5 is involved in control of translational fidelity.

One of the primary rRNA binding proteins, it binds directly to 16S rRNA where it nucleates assembly of the body of the 30S subunit. Functionally, with S5 and S12 plays an important role in translational accuracy. In Bordetella avium (strain 197N), this protein is Small ribosomal subunit protein uS4.